The following is a 150-amino-acid chain: MGVFDPTLLILLALAALGIISQNMTVTLAILFLVAVRITPLNHYFPWVEKYGLSFGVLVLTIGVMAPIASGKISAGDVLSSFLHWKSLMAVAIGVAVSWLGGRGVVLMSNQPSVVAGLLVGTVMGVALFRGVPVGPLIAAGLLSLLIGKG.

Transmembrane regions (helical) follow at residues 10–32 (ILLALAALGIISQNMTVTLAILF), 51–71 (YGLSFGVLVLTIGVMAPIASG), 88–108 (LMAVAIGVAVSWLGGRGVVLM), and 127–147 (ALFRGVPVGPLIAAGLLSLLI).

This sequence belongs to the UPF0756 family.

Its subcellular location is the cell membrane. The protein is UPF0756 membrane protein Dd1591_2981 of Dickeya chrysanthemi (strain Ech1591) (Dickeya zeae (strain Ech1591)).